The primary structure comprises 398 residues: Acetate kinase (398 aa).

A Mg(2+)-binding site is contributed by Asn8. Residue Lys15 coordinates ATP. A substrate-binding site is contributed by Arg89. Asp146 (proton donor/acceptor) is an active-site residue. Residues 206–210, 283–285, and 331–335 contribute to the ATP site; these read HIGNG, DMR, and GMGEN. Position 383 (Glu383) interacts with Mg(2+).

The protein belongs to the acetokinase family. Homodimer. Mg(2+) serves as cofactor. Mn(2+) is required as a cofactor.

It localises to the cytoplasm. It catalyses the reaction acetate + ATP = acetyl phosphate + ADP. Its pathway is metabolic intermediate biosynthesis; acetyl-CoA biosynthesis; acetyl-CoA from acetate: step 1/2. Functionally, catalyzes the formation of acetyl phosphate from acetate and ATP. Can also catalyze the reverse reaction. This is Acetate kinase from Streptococcus pyogenes serotype M2 (strain MGAS10270).